A 227-amino-acid chain; its full sequence is Adenylate kinase (227 aa).

21 to 26 (GAGKGT) provides a ligand contact to ATP. Positions 41–70 (ATGDMLRSQVAKQTPLGIEAKKIMDDGKLV) are NMP. AMP contacts are provided by residues Thr42, Arg47, 68 to 70 (KLV), 97 to 100 (GFPR), and Gln104. Residues 138–175 (GRLVHPASGRSYHKVFNPPKTEMKDDITGEDLVQRSDD) form an LID region. Residues Arg139 and 148-149 (SY) contribute to the ATP site. The AMP site is built by Arg172 and Arg183. Gln211 contributes to the ATP binding site.

This sequence belongs to the adenylate kinase family. AK2 subfamily. As to quaternary structure, monomer.

It is found in the cytoplasm. Its subcellular location is the cytosol. It localises to the mitochondrion intermembrane space. The catalysed reaction is AMP + ATP = 2 ADP. Catalyzes the reversible transfer of the terminal phosphate group between ATP and AMP. Plays an important role in cellular energy homeostasis and in adenine nucleotide metabolism. Adenylate kinase activity is critical for regulation of the phosphate utilization and the AMP de novo biosynthesis pathways. This Kluyveromyces lactis (strain ATCC 8585 / CBS 2359 / DSM 70799 / NBRC 1267 / NRRL Y-1140 / WM37) (Yeast) protein is Adenylate kinase.